The sequence spans 281 residues: Glycerol uptake facilitator protein (281 aa).

The Cytoplasmic portion of the chain corresponds to 1-5 (MSQTS). The chain crosses the membrane as a helical span at residues 6–34 (TLKGQCIAEFLGTGLLIFFGVGCVAALKV). Topologically, residues 35–39 (AGASF) are periplasmic. A helical membrane pass occupies residues 40–60 (GQWEISVIWGLGVAMAIYLTA). Residues 61-63 (GVS) lie on the Cytoplasmic side of the membrane. Residues 64-67 (GAHL) lie within the membrane without spanning it. The NPA 1 signature appears at 68-70 (NPA). Positions 68–78 (NPAVTIALWLF) form an intramembrane region, helical. Residues 79-84 (ACFDKR) lie on the Cytoplasmic side of the membrane. The helical transmembrane segment at 85-108 (KVIPFIVSQVAGAFCAAALVYGLY) threads the bilayer. Topologically, residues 109-143 (YNLFFDFEQTHHIVRGSVESVDLAGTFSTYPNPHI) are periplasmic. A helical transmembrane segment spans residues 144-169 (NFVQAFAVEMVITAILMGLILALTDD). Topologically, residues 170-177 (GNGVPRGP) are cytoplasmic. A helical membrane pass occupies residues 178–194 (LAPLLIGLLIAVIGASM). The Periplasmic portion of the chain corresponds to 195–198 (GPLT). The stretch at 199–202 (GFAM) is an intramembrane region. Positions 203-205 (NPA) match the NPA 2 motif. The helical intramembrane region spans 203–216 (NPARDFGPKVFAWL). Topologically, residues 217–231 (AGWGNVAFTGGRDIP) are periplasmic. The chain crosses the membrane as a helical span at residues 232–254 (YFLVPLFSPIVGAIVGAFAYRKL). The Cytoplasmic portion of the chain corresponds to 255–281 (IGRHLPCDICVVEEKETTTPSEQKASL).

Belongs to the MIP/aquaporin (TC 1.A.8) family. As to quaternary structure, homotetramer.

The protein localises to the cell inner membrane. The catalysed reaction is glycerol(in) = glycerol(out). Mediates glycerol diffusion across the cytoplasmic membrane via a pore-type mechanism. The protein is Glycerol uptake facilitator protein (glpF) of Shigella flexneri.